Consider the following 436-residue polypeptide: EPS I polysaccharide export inner membrane protein EpsE (436 aa).

A run of 12 helical transmembrane segments spans residues 20-40, 49-69, 91-111, 133-153, 160-180, 185-205, 234-254, 261-281, 307-327, 341-361, 375-395, and 396-416; these read VLGLGAAVASRGAVFVSNILL, FGLFSYAYVTALNLGLFLATG, LCAFIVLLMALIAVAAAALYL, AAIVLIATAFTQALQSFQYAM, ATISIGAAVLLLTMLWAMGPI, LALTIFLAVNAGAAVSQLLVL, VLTTSMGAPVHWICLSMLAAM, LALFSVAFQWYIAITFIPATL, ALLFGGGLSLALGCASFLLAG, AASSMRSLSVAAALCGVSVLL, FAMAAVYSVIYVAASYLALRL, and GFGATSIGLAMSAAYCCLILF.

It to E.coli bicyclomycin resistance protein (BCR).

It is found in the cell inner membrane. Its function is as follows. Probably involved in polymerization and/or export of exopolysaccharide EPS I which functions as a virulence factor. May play a role in export of EPS I or its intermediates across the membranes. The sequence is that of EPS I polysaccharide export inner membrane protein EpsE (epsE) from Ralstonia solanacearum (Pseudomonas solanacearum).